The primary structure comprises 124 residues: MTHMHITSWALGLILFIIALVMYKKGNQKPAKIIHMILRLMFILIIITGGILTWDYIQGYGMPILGEALVKALAGLWLVAMMEMILTGKAKGKPTTAKWVQFSIALVLVIVLGFFRLPMGFLFI.

The next 4 membrane-spanning stretches (helical) occupy residues 3 to 23 (HMHI…LVMY), 33 to 53 (IIHM…GILT), 62 to 82 (MPIL…VAMM), and 104 to 124 (IALV…FLFI).

It belongs to the UPF0344 family.

Its subcellular location is the cell membrane. The protein is UPF0344 protein OB1184 of Oceanobacillus iheyensis (strain DSM 14371 / CIP 107618 / JCM 11309 / KCTC 3954 / HTE831).